Consider the following 174-residue polypeptide: Probable N-acetyltransferase Rv2775 (174 aa).

One can recognise an N-acetyltransferase domain in the interval 6–172 (IRIRAAKPID…VGYRLYRSAP (167 aa)).

It belongs to the acetyltransferase family.

The sequence is that of Probable N-acetyltransferase Rv2775 from Mycobacterium tuberculosis (strain ATCC 25618 / H37Rv).